Reading from the N-terminus, the 219-residue chain is MRLRSKKWAVPFIDEHPDLIIKDQRAKQLKGSWSSVFGNNHPLYLEIGSGKGQFILDNAIKYPENNFIGLELQPTAVAIAGKKAFKQEPQLANLKLILGDGGDVSDYFADNEISKIFLNHSDPWPKAKHEKRRLTAENFLKSYSKILLPNGSLELKTDNLGLFEYSLSSFKKFGLSWPEEQISYDLHHELKKNPVNIETEYEKKFAEMNQPEYWIRVNF.

Glu-46, Glu-71, Asp-100, and Asp-122 together coordinate S-adenosyl-L-methionine. Asp-122 is an active-site residue. Lys-126 is a substrate binding site. The segment at 128–133 is interaction with RNA; sequence KHEKRR. Residues Asp-158 and 199–202 contribute to the substrate site; that span reads TEYE.

This sequence belongs to the class I-like SAM-binding methyltransferase superfamily. TrmB family.

It carries out the reaction guanosine(46) in tRNA + S-adenosyl-L-methionine = N(7)-methylguanosine(46) in tRNA + S-adenosyl-L-homocysteine. The protein operates within tRNA modification; N(7)-methylguanine-tRNA biosynthesis. Its function is as follows. Catalyzes the formation of N(7)-methylguanine at position 46 (m7G46) in tRNA. The polypeptide is tRNA (guanine-N(7)-)-methyltransferase (Oenococcus oeni (strain ATCC BAA-331 / PSU-1)).